We begin with the raw amino-acid sequence, 403 residues long: Ribose-phosphate pyrophosphokinase 1, chloroplastic (403 aa).

Residues 1–49 constitute a chloroplast transit peptide; the sequence is MASLGLSFPPAAKTPTYLASSSSTFFSNSSLSVRTSQFRSRNSVFACVK. Residues Asp-217, His-219, Asp-228, and Asp-232 each contribute to the Mg(2+) site. Residues 303-318 are binding of phosphoribosylpyrophosphate; the sequence is GKVAIMVDDMIDTAGT.

Belongs to the ribose-phosphate pyrophosphokinase family. The cofactor is Mg(2+).

It is found in the plastid. Its subcellular location is the chloroplast. The catalysed reaction is D-ribose 5-phosphate + ATP = 5-phospho-alpha-D-ribose 1-diphosphate + AMP + H(+). In Arabidopsis thaliana (Mouse-ear cress), this protein is Ribose-phosphate pyrophosphokinase 1, chloroplastic (PRS1).